We begin with the raw amino-acid sequence, 123 residues long: Ig heavy chain V region H8 (123 aa).

The 114-residue stretch at 1-114 folds into the Ig-like domain; sequence EVKLVESGGG…BSYWYFDVWG (114 aa).

The protein is Ig heavy chain V region H8 of Mus musculus (Mouse).